The chain runs to 477 residues: Myc-associated zinc finger protein (477 aa).

2 disordered regions span residues 59–78 and 121–144; these read AQSP…APAA and TVDT…SAPA. The segment covering 130–140 has biased composition (pro residues); that stretch reads PPAPPPPPPAV. 4 C2H2-type zinc fingers span residues 190-212, 279-301, 307-329, and 337-360; these read YICA…EAIH, HACE…KLSH, YQCP…VRSH, and YNCS…RQVH. At S361 the chain carries Phosphoserine. The C2H2-type 5 zinc finger occupies 366–388; that stretch reads FKCEKCEAAFATKDRLRAHTVRH. A C2H2-type 6; atypical zinc finger spans residues 392 to 413; the sequence is VPCHVCGKMLSSAYISDHMKVH.

Interacts with BPTF. In terms of tissue distribution, expressed in Purkinje cells in the brain (at protein level).

It is found in the nucleus. In terms of biological role, transcriptional regulator. Acts as a transcriptional activator that binds to purine-rich GAGA sites found in the promoter of many genes including insulin I and II and islet amyloid polypeptide. The sequence is that of Myc-associated zinc finger protein (Maz) from Mus musculus (Mouse).